The sequence spans 978 residues: Exocyst complex component 5 (978 aa).

Residues 1–11 (MSWARNIQSRI) show a composition bias toward polar residues. Disordered regions lie at residues 1–87 (MSWA…TTTQ) and 122–246 (TSPS…TTPY). Composition is skewed to low complexity over residues 36 to 52 (PSSP…TSLT) and 62 to 86 (SQPT…TTTT). Residues 122–142 (TSPSMASPIGTSTGIQNPNAK) show a composition bias toward polar residues. Residues 143–245 (PSSLPSPSQS…QPTPIKQTTP (103 aa)) show a composition bias toward low complexity. Residues 303-325 (NTQLQLSQLESNIDRRLDDLAEE) are a coiled coil.

Belongs to the SEC10 family. The exocyst complex is composed of sec3/exoc1, sec5/exoc2, sec6/exoc3, sec8/exoc4, sec10/exoc5, sec15/exoc6, exo70/exoc7 and exo84/exoc8.

Its function is as follows. Component of the exocyst complex involved in the docking of exocytic vesicles with fusion sites on the plasma membrane. The polypeptide is Exocyst complex component 5 (exoc5) (Dictyostelium discoideum (Social amoeba)).